Reading from the N-terminus, the 177-residue chain is ATP synthase subunit delta (177 aa).

Belongs to the ATPase delta chain family. F-type ATPases have 2 components, F(1) - the catalytic core - and F(0) - the membrane proton channel. F(1) has five subunits: alpha(3), beta(3), gamma(1), delta(1), epsilon(1). F(0) has three main subunits: a(1), b(2) and c(10-14). The alpha and beta chains form an alternating ring which encloses part of the gamma chain. F(1) is attached to F(0) by a central stalk formed by the gamma and epsilon chains, while a peripheral stalk is formed by the delta and b chains.

Its subcellular location is the cell inner membrane. Functionally, f(1)F(0) ATP synthase produces ATP from ADP in the presence of a proton or sodium gradient. F-type ATPases consist of two structural domains, F(1) containing the extramembraneous catalytic core and F(0) containing the membrane proton channel, linked together by a central stalk and a peripheral stalk. During catalysis, ATP synthesis in the catalytic domain of F(1) is coupled via a rotary mechanism of the central stalk subunits to proton translocation. Its function is as follows. This protein is part of the stalk that links CF(0) to CF(1). It either transmits conformational changes from CF(0) to CF(1) or is implicated in proton conduction. This chain is ATP synthase subunit delta, found in Shewanella piezotolerans (strain WP3 / JCM 13877).